Reading from the N-terminus, the 619-residue chain is Schlafen family member 12-like (619 aa).

A helical membrane pass occupies residues 598–618; the sequence is IFLFVCLFRFCLFVCLFVFFL.

It belongs to the Schlafen family.

It localises to the membrane. The sequence is that of Schlafen family member 12-like (SLFN12L) from Pongo abelii (Sumatran orangutan).